The sequence spans 99 residues: Integration host factor subunit alpha (99 aa).

The segment at 49–75 (FGNFDLRDKNQRPGRNPKTGEDIPITA) is disordered.

This sequence belongs to the bacterial histone-like protein family. Heterodimer of an alpha and a beta chain.

Its function is as follows. This protein is one of the two subunits of integration host factor, a specific DNA-binding protein that functions in genetic recombination as well as in transcriptional and translational control. The chain is Integration host factor subunit alpha from Salmonella arizonae (strain ATCC BAA-731 / CDC346-86 / RSK2980).